Consider the following 815-residue polypeptide: MEDGFSSYSSLYDTSSLLQFCNDDSASAASSMEVTDRIASLEQRVQMQEDDIQLLKSALADVVRRLNITEEQQAVLNRKGPTKARPLMQTLPLRTTVNNGTVLPKKPTGSLPSPSGVRKETAVPATKSNIKRTSSSERVSPGGRRESNGDSRGNRNRTGSTSSSSSGKKNSESKPKEPVFSAEEGYVKMFLRGRPVTMYMPKDQVDSYSLEAKVELPTKRLKLEWVYGYRGRDCRNNLYLLPTGETVYFIASVVVLYNVEEQLQRHYAGHNDDVKCLAVHPDRITIATGQVAGTSKDGKQLPPHVRIWDSVTLNTLHVIGIGFFDRAVTCIAFSKSNGGTNLCAVDDSNDHVLSVWDWQKEEKLADVKCSNEAVFAADFHPTDTNIIVTCGKSHLYFWTLEGSSLNKKQGLFEKQEKPKFVLCVTFSENGDTITGDSSGNILVWGKGTNRISYAVQGAHEGGIFALCMLRDGTLVSGGGKDRKLISWSGNYQKLRKTEIPEQFGPIRTVAEGKGDVILIGTTRNFVLQGTLSGDFTPITQGHTDELWGLAIHASKSQFLTCGHDKHATLWDAVGHRPVWDKIIEDPAQSSGFHPSGSVVAVGTLTGRWFVFDTETKDLVTVHTDGNEQLSVMRYSPDGNFLAIGSHDNCIYIYGVSDNGRKYTRVGKCSGHSSFITHLDWSVNSQFLVSNSGDYEILYWVPSACKQVVSVETTRDIEWATYTCTLGFHVFGVWPEGSDGTDINAVCRAHEKKLLSTGDDFGKVHLFSYPCSQFRAPSHIYGGHSSHVTNVDFLCEDSHLISTGGKDTSIMQWRVI.

A coiled-coil region spans residues 31 to 72 (SMEVTDRIASLEQRVQMQEDDIQLLKSALADVVRRLNITEEQ). Residues 77–179 (NRKGPTKARP…NSESKPKEPV (103 aa)) form a disordered region. A compositionally biased stretch (polar residues) spans 92 to 101 (PLRTTVNNGT). Residue Ser113 is modified to Phosphoserine. Residues 126 to 138 (TKSNIKRTSSSER) are compositionally biased toward polar residues. A compositionally biased stretch (basic and acidic residues) spans 143–153 (GRRESNGDSRG). Low complexity predominate over residues 156-168 (NRTGSTSSSSSGK). A tandem atypical propeller in EMLs region spans residues 176-815 (KEPVFSAEEG…DTSIMQWRVI (640 aa)). 12 WD repeats span residues 261–310 (EQLQ…IWDS), 315–358 (TLHV…VWDW), 363–400 (KLAD…FWTL), 409–446 (QGLF…VWGK), 450–489 (RISY…SWSG), 493–530 (KLRK…LQGT), 535–572 (FTPI…LWDA), 578–613 (VWDK…VFDT), 617–655 (DLVT…IYGV), 664–701 (RVGK…YWVP), 709–768 (SVET…LFSY), and 775–814 (APSH…QWRV).

The protein belongs to the WD repeat EMAP family. As to quaternary structure, homotrimer; self-association is mediated by the N-terminal coiled coil. Does not interact with EML3. Binds repolymerizing microtubules. Binds unpolymerized tubulins via its WD repeat region. Interacts with TASOR. In terms of tissue distribution, ubiquitous; expressed in most tissues with the exception of thymus and peripheral blood lymphocytes.

It localises to the cytoplasm. The protein localises to the perinuclear region. It is found in the cytoskeleton. In terms of biological role, modulates the assembly and organization of the microtubule cytoskeleton, and probably plays a role in regulating the orientation of the mitotic spindle and the orientation of the plane of cell division. Required for normal proliferation of neuronal progenitor cells in the developing brain and for normal brain development. Does not affect neuron migration per se. This chain is Echinoderm microtubule-associated protein-like 1 (EML1), found in Homo sapiens (Human).